A 103-amino-acid chain; its full sequence is Acylphosphatase-2 (103 aa).

Ser2 is modified (N-acetylserine). Residues 13–103 (SVDYEVFGRV…LDFSGFSTRY (91 aa)) form the Acylphosphatase-like domain. S-glutathionyl cysteine; alternate is present on Cys26. Catalysis depends on residues Arg28 and Asn46.

Belongs to the acylphosphatase family. As to quaternary structure, monomer (TU1) or homodimer (TU3) in absence of reducing factors; disulfide linked.

The catalysed reaction is an acyl phosphate + H2O = a carboxylate + phosphate + H(+). Its physiological role is not yet clear. In Meleagris gallopavo (Wild turkey), this protein is Acylphosphatase-2 (ACYP2).